The sequence spans 463 residues: Ribosomal protein uS12 methylthiotransferase RimO (463 aa).

The MTTase N-terminal domain maps to 11–126 (PKIGFVSLGC…VMEVVHTHCP (116 aa)). Residues cysteine 20, cysteine 56, cysteine 85, cysteine 161, cysteine 165, and cysteine 168 each coordinate [4Fe-4S] cluster. Residues 147–388 (LTPRHYAYLK…MAVAEEVSTA (242 aa)) form the Radical SAM core domain. Residues 391–463 (QRRVGQTMQV…QGHDLVGVPV (73 aa)) enclose the TRAM domain.

It belongs to the methylthiotransferase family. RimO subfamily. [4Fe-4S] cluster serves as cofactor.

It is found in the cytoplasm. It catalyses the reaction L-aspartate(89)-[ribosomal protein uS12]-hydrogen + (sulfur carrier)-SH + AH2 + 2 S-adenosyl-L-methionine = 3-methylsulfanyl-L-aspartate(89)-[ribosomal protein uS12]-hydrogen + (sulfur carrier)-H + 5'-deoxyadenosine + L-methionine + A + S-adenosyl-L-homocysteine + 2 H(+). In terms of biological role, catalyzes the methylthiolation of an aspartic acid residue of ribosomal protein uS12. The chain is Ribosomal protein uS12 methylthiotransferase RimO from Acidovorax sp. (strain JS42).